We begin with the raw amino-acid sequence, 344 residues long: Thioredoxin reductase FGSG_00043 (344 aa).

FAD-binding positions include 12–15 (GGPA), 34–39 (DSVSYR), H51, and A121. C165 and C168 are oxidised to a cystine. FAD is bound by residues D314 and 321–322 (FV).

It belongs to the class-II pyridine nucleotide-disulfide oxidoreductase family. In terms of assembly, homodimer. FAD serves as cofactor.

It functions in the pathway mycotoxin biosynthesis. Functionally, thioredoxin reductase; part of the gene cluster that mediates the biosynthesis of gramillins A and B, bicyclic lipopeptides that induce cell death in maize leaves but not in wheat leaves. The nonribosomal peptide synthetase GRA1 incorporates respectively a glutamic adic (Glu), a leucine (Leu), a serine (Ser), a hydroxyglutamine (HOGln), a 2-amino decanoic acid, and 2 cysteins (CysB and CysA). The biosynthesis of 2-amino decanoic acid incorporated in gramillins could be initiated by a fatty acid synthase composed of the alpha and beta subunits FGSG_00036 and FGSG_11656. The cytochrome P450 monooxygenase FGSG_15680 could hydroxylate the fatty acid chain. Subsequent oxidation to the ketone by the oxidoreductase FGSG_00048 and transamination by aminotransferase FGSG_00049 could form 2-amino-decanoic acid. On the other hand, FGSG_15680 could also be responsible for the HO-modified glutamine at the gamma-position. Whether hydroxylation occurs on the fully assembled product or on the Gln residue prior to assembly into the gramillins requires further proof. The thioredoxin FGSG_00043 could also be required for the disulfide-bond formation between CysA and CysB. The specific involvement of the remaining proteins from the cluster is more difficult to discern, but could have broader regulatory (FGSG_00040 and FGSG_11657) or enzymatic functions (FGSG_00044 and FGSG_00045). The final C-domain of GRA1 does not possess the expected sequence of a termination CT domain, often implicated in macrocyclization and release of a cyclopeptidein fungal NRPs; and the thioesterase FGSG_00047 may act in concert with the terminal C-domain of GRA1 to catalyze the formation of the macrocyclic anhydride and release of the products. The chain is Thioredoxin reductase FGSG_00043 from Gibberella zeae (strain ATCC MYA-4620 / CBS 123657 / FGSC 9075 / NRRL 31084 / PH-1) (Wheat head blight fungus).